The primary structure comprises 248 residues: 2,3-dihydro-2,3-dihydroxybenzoate dehydrogenase (248 aa).

9–33 (WVTGAGKGIGYATALAFVEAGAKVT) provides a ligand contact to NAD(+). Ser-131 serves as a coordination point for substrate. The Proton acceptor role is filled by Tyr-144.

It belongs to the short-chain dehydrogenases/reductases (SDR) family. Homotetramer; dimer of dimers. EntA and EntE interact together.

The catalysed reaction is (2S,3S)-2,3-dihydroxy-2,3-dihydrobenzoate + NAD(+) = 2,3-dihydroxybenzoate + NADH + H(+). It participates in siderophore biosynthesis; enterobactin biosynthesis. Inhibited by cis-2-hydroxy-3-cyclohexen-1-carboxylate, cis-2-hydroxycyclohexane-1-carboxylate and trans-2-hydroxycyclohexane-1-carboxylate. Its function is as follows. Involved in the biosynthesis of the siderophore enterobactin (enterochelin), which is a macrocyclic trimeric lactone of N-(2,3-dihydroxybenzoyl)-serine. Catalyzes the reversible NAD-dependent oxidation of the C3-hydroxyl group of 2,3-dihydro-2,3-dihydroxybenzoate (2,3-diDHB), producing the transient intermediate 2-hydroxy-3-oxo-4,6-cyclohexadiene-1-carboxylate, which undergoes rapid aromatization to the final product, 2,3-dihydroxybenzoate (2,3-DHB). Only the compounds with a C3-hydroxyl group such as methyl 2,3-dihydro-2,3-dihydroxybenzoate, methyl-3-hydroxy-1,4-cyclohexadiene-1-carboxylate, trans-3-hydroxy-2-cyclohexene-1-carboxylate, cis-3-hydroxy-4-cyclohexene-1-carboxylate, cis-3-hydroxycyclohexane-1-carboxylic acid are oxidized to the corresponding ketone products. The stereospecificity of the C3 allylic alcohol group oxidation is 3R in a 1R,3R dihydro substrate. It can also increase the DHB-AMP ligase activity of EntE by interaction EntE. This is 2,3-dihydro-2,3-dihydroxybenzoate dehydrogenase from Escherichia coli (strain K12).